The chain runs to 459 residues: uncharacterized protein (459 aa).

The TRAM domain occupies 5 to 63 (PVEEGQKFPLTIRRMGINGEGIGYFKKAVVFVPGAITGEEVVVEAVKVRDRFTEAKLNK). The [4Fe-4S] cluster site is built by C76, C82, C85, and C166. Q290, Y319, D340, and D388 together coordinate S-adenosyl-L-methionine. C415 acts as the Nucleophile in catalysis.

The protein belongs to the class I-like SAM-binding methyltransferase superfamily. RNA M5U methyltransferase family.

This is an uncharacterized protein from Listeria monocytogenes serovar 1/2a (strain ATCC BAA-679 / EGD-e).